We begin with the raw amino-acid sequence, 221 residues long: Protein FixW (221 aa).

The Thioredoxin domain occupies 5–156 (LNLGSPAPPI…LPKVIDGNWR (152 aa)). C43 and C46 form a disulfide bridge.

The protein belongs to the thioredoxin family.

The polypeptide is Protein FixW (fixW) (Rhizobium leguminosarum).